The sequence spans 176 residues: ATP-dependent protease subunit HslV (176 aa).

The active site involves T2. 3 residues coordinate Na(+): G157, C160, and T163.

The protein belongs to the peptidase T1B family. HslV subfamily. In terms of assembly, a double ring-shaped homohexamer of HslV is capped on each side by a ring-shaped HslU homohexamer. The assembly of the HslU/HslV complex is dependent on binding of ATP.

The protein resides in the cytoplasm. The catalysed reaction is ATP-dependent cleavage of peptide bonds with broad specificity.. With respect to regulation, allosterically activated by HslU binding. Protease subunit of a proteasome-like degradation complex believed to be a general protein degrading machinery. The chain is ATP-dependent protease subunit HslV from Escherichia coli O139:H28 (strain E24377A / ETEC).